A 445-amino-acid chain; its full sequence is Trigger factor (445 aa).

One can recognise a PPIase FKBP-type domain in the interval 171-256 (NDIVIIDFKG…VHVVNEVETP (86 aa)).

Belongs to the FKBP-type PPIase family. Tig subfamily.

The protein localises to the cytoplasm. The enzyme catalyses [protein]-peptidylproline (omega=180) = [protein]-peptidylproline (omega=0). Involved in protein export. Acts as a chaperone by maintaining the newly synthesized protein in an open conformation. Functions as a peptidyl-prolyl cis-trans isomerase. This chain is Trigger factor, found in Malacoplasma penetrans (strain HF-2) (Mycoplasma penetrans).